The primary structure comprises 271 residues: Ribosomal RNA small subunit methyltransferase A (271 aa).

6 residues coordinate S-adenosyl-L-methionine: Asn-18, Leu-20, Gly-45, Glu-66, Asp-91, and Asn-112.

The protein belongs to the class I-like SAM-binding methyltransferase superfamily. rRNA adenine N(6)-methyltransferase family. RsmA subfamily.

The protein localises to the cytoplasm. The catalysed reaction is adenosine(1518)/adenosine(1519) in 16S rRNA + 4 S-adenosyl-L-methionine = N(6)-dimethyladenosine(1518)/N(6)-dimethyladenosine(1519) in 16S rRNA + 4 S-adenosyl-L-homocysteine + 4 H(+). Specifically dimethylates two adjacent adenosines (A1518 and A1519) in the loop of a conserved hairpin near the 3'-end of 16S rRNA in the 30S particle. May play a critical role in biogenesis of 30S subunits. The sequence is that of Ribosomal RNA small subunit methyltransferase A from Vibrio cholerae serotype O1 (strain ATCC 39315 / El Tor Inaba N16961).